The sequence spans 212 residues: Prolactin (212 aa).

Positions 1–26 (MARCCKCPRLHLAVTVLACVLVFTEG) are cleaved as a signal peptide. Intrachain disulfides connect Cys71-Cys185 and Cys202-Cys212.

The protein belongs to the somatotropin/prolactin family. In terms of tissue distribution, pituitary gland.

Its subcellular location is the secreted. This is Prolactin (prl) from Ictalurus punctatus (Channel catfish).